The following is a 435-amino-acid chain: Islet cell autoantigen 1-like protein (435 aa).

The AH domain maps to 44–247 (ASDAELDAKL…TAQMMSQIQE (204 aa)). The segment at 391–435 (WASQEGSEHSDTLPVPSQHPKKLKYLGPLSNPDAIGHSDDELLNA) is disordered. Basic and acidic residues predominate over residues 426–435 (GHSDDELLNA).

This Rattus norvegicus (Rat) protein is Islet cell autoantigen 1-like protein (Ica1l).